The following is a 404-amino-acid chain: MAAIKKVVLAYSGGLDTSVILKWLGDNYHCEVVTFTADIGQGEEVEPAREKALKLGIKSENIFIEDLREEFIKDFVFPMFRANTIYEGEYLLGTSIARPLIAKRLVEIAKSVGADAIAHGATGKGNDQVRFELGAYALNPDIKVIAPWREWDLNSREKLLAYAESAGIAIEKKQNKSPYSMDANLLHISYEGQILEDPNVEPEEDMWRWSVSPLNAPDKPESISIEFQNGDGVAINGEKLSPANFWVNLNELGGKHGIGRLDLVENRYVGMKSRGCYETPGGTIYLKAHRAIESLCLDREEAHLKDSIMPKYAELIYNGYWFSPEREALQALIDKTQQKVSGVVRLKLYKGNVIVIGRESKNSLFNAAYSTFEEDSVYNQKDAAGFIKLNALRFIIAGKANRDK.

Residues 10–18 (AYSGGLDTS) and Ala37 contribute to the ATP site. The L-citrulline site is built by Tyr90 and Ser95. Gly120 contributes to the ATP binding site. The L-aspartate site is built by Thr122, Asn126, and Asp127. Asn126 provides a ligand contact to L-citrulline. Arg130, Ser180, Ser189, Glu265, and Tyr277 together coordinate L-citrulline.

Belongs to the argininosuccinate synthase family. Type 1 subfamily. Homotetramer.

It is found in the cytoplasm. The catalysed reaction is L-citrulline + L-aspartate + ATP = 2-(N(omega)-L-arginino)succinate + AMP + diphosphate + H(+). The protein operates within amino-acid biosynthesis; L-arginine biosynthesis; L-arginine from L-ornithine and carbamoyl phosphate: step 2/3. This is Argininosuccinate synthase from Helicobacter hepaticus (strain ATCC 51449 / 3B1).